The primary structure comprises 69 residues: Conotoxin Lt5.10 (69 aa).

The N-terminal stretch at M1–P19 is a signal peptide. A propeptide spanning residues K20–A54 is cleaved from the precursor.

It belongs to the conotoxin T superfamily. Post-translationally, contains 2 disulfide bonds that can be either 'C1-C3, C2-C4' or 'C1-C4, C2-C3', since these disulfide connectivities have been observed for conotoxins with cysteine framework V (for examples, see AC P0DQQ7 and AC P81755). In terms of tissue distribution, expressed by the venom duct.

It localises to the secreted. The sequence is that of Conotoxin Lt5.10 from Conus litteratus (Lettered cone).